Here is a 456-residue protein sequence, read N- to C-terminus: Argininosuccinate lyase (456 aa).

Belongs to the lyase 1 family. Argininosuccinate lyase subfamily.

Its subcellular location is the cytoplasm. It carries out the reaction 2-(N(omega)-L-arginino)succinate = fumarate + L-arginine. Its pathway is amino-acid biosynthesis; L-arginine biosynthesis; L-arginine from L-ornithine and carbamoyl phosphate: step 3/3. This Listeria monocytogenes serotype 4b (strain CLIP80459) protein is Argininosuccinate lyase.